The following is a 413-amino-acid chain: GDP-mannose-dependent alpha-mannosyltransferase (413 aa).

The protein belongs to the glycosyltransferase group 1 family.

It participates in phospholipid metabolism; phosphatidylinositol metabolism. In terms of biological role, catalyzes the addition of a mannose residue from GDP-D-mannose to GlcAGroAc2 to generate 1,2-di-O-C16/C18:1-(alpha-D-mannopyranosyl)-(1-4)-(alpha-D-glucopyranosyluronic acid)-(1-3)-glycerol(ManGlcAGroAc2). This Corynebacterium glutamicum (strain ATCC 13032 / DSM 20300 / JCM 1318 / BCRC 11384 / CCUG 27702 / LMG 3730 / NBRC 12168 / NCIMB 10025 / NRRL B-2784 / 534) protein is GDP-mannose-dependent alpha-mannosyltransferase (mgtA).